The chain runs to 473 residues: Glucose-1-phosphate adenylyltransferase small subunit, chloroplastic/amyloplastic (473 aa).

Positions 1 to 36 are disordered; sequence MDVPLASKTFPSPSPSKREQCNIDGHKSSSKHADLN. A compositionally biased stretch (basic and acidic residues) spans 16–36; that stretch reads SKREQCNIDGHKSSSKHADLN.

The protein belongs to the bacterial/plant glucose-1-phosphate adenylyltransferase family. Heterotetramer. As to expression, abundantly expressed in the whole grains, a slightly less abundant expression is seen in leaves, while a low level expression is seen in the roots. A greater expression is seen in the endosperm than in the embryo and pericarp layers.

The protein resides in the plastid. The protein localises to the chloroplast. It is found in the amyloplast. The enzyme catalyses alpha-D-glucose 1-phosphate + ATP + H(+) = ADP-alpha-D-glucose + diphosphate. It functions in the pathway glycan biosynthesis; starch biosynthesis. Its activity is regulated as follows. Insensitive to 3'phosphoglycerate and orthophosphate. Its function is as follows. This protein plays a role in synthesis of starch. It catalyzes the synthesis of the activated glycosyl donor, ADP-glucose from Glc-1-P and ATP. This chain is Glucose-1-phosphate adenylyltransferase small subunit, chloroplastic/amyloplastic (AGP-S), found in Triticum aestivum (Wheat).